The sequence spans 123 residues: Large ribosomal subunit protein uL14 (123 aa).

The protein belongs to the universal ribosomal protein uL14 family. As to quaternary structure, part of the 50S ribosomal subunit. Forms a cluster with proteins L3 and L19. In the 70S ribosome, L14 and L19 interact and together make contacts with the 16S rRNA in bridges B5 and B8.

Its function is as follows. Binds to 23S rRNA. Forms part of two intersubunit bridges in the 70S ribosome. This chain is Large ribosomal subunit protein uL14, found in Serratia proteamaculans (strain 568).